Consider the following 327-residue polypeptide: Phenylalanine--tRNA ligase alpha subunit (327 aa).

Glu-252 is a binding site for Mg(2+).

The protein belongs to the class-II aminoacyl-tRNA synthetase family. Phe-tRNA synthetase alpha subunit type 1 subfamily. As to quaternary structure, tetramer of two alpha and two beta subunits. The cofactor is Mg(2+).

It localises to the cytoplasm. The enzyme catalyses tRNA(Phe) + L-phenylalanine + ATP = L-phenylalanyl-tRNA(Phe) + AMP + diphosphate + H(+). This chain is Phenylalanine--tRNA ligase alpha subunit, found in Salmonella agona (strain SL483).